The primary structure comprises 540 residues: Phosphoenolpyruvate carboxykinase (ATP) (540 aa).

Arg-65 provides a ligand contact to substrate. Lys-87 carries the N6-acetyllysine modification. 2 residues coordinate substrate: Tyr-207 and Lys-213. Residues Lys-213, His-232, and 248–256 (GLSGTGKTT) contribute to the ATP site. Mn(2+) is bound by residues Lys-213 and His-232. Asp-269 contacts Mn(2+). Residues Glu-297, Arg-333, 449–450 (RI), and Thr-455 contribute to the ATP site. Arg-333 provides a ligand contact to substrate. Position 523 is an N6-acetyllysine (Lys-523).

The protein belongs to the phosphoenolpyruvate carboxykinase (ATP) family. Monomer. Mn(2+) serves as cofactor.

It is found in the cytoplasm. It catalyses the reaction oxaloacetate + ATP = phosphoenolpyruvate + ADP + CO2. It participates in carbohydrate biosynthesis; gluconeogenesis. Its function is as follows. Involved in the gluconeogenesis. Catalyzes the conversion of oxaloacetate (OAA) to phosphoenolpyruvate (PEP) through direct phosphoryl transfer between the nucleoside triphosphate and OAA. This is Phosphoenolpyruvate carboxykinase (ATP) from Escherichia coli O6:K15:H31 (strain 536 / UPEC).